The sequence spans 155 residues: RNA pyrophosphohydrolase (155 aa).

The 143-residue stretch at 6–148 (GYRANVAIVL…KQEVYRKALT (143 aa)) folds into the Nudix hydrolase domain. A Nudix box motif is present at residues 38–59 (GGVDTGETPLQAMYRELHEEIG).

The protein belongs to the Nudix hydrolase family. RppH subfamily. It depends on a divalent metal cation as a cofactor.

Its function is as follows. Accelerates the degradation of transcripts by removing pyrophosphate from the 5'-end of triphosphorylated RNA, leading to a more labile monophosphorylated state that can stimulate subsequent ribonuclease cleavage. The polypeptide is RNA pyrophosphohydrolase (Francisella tularensis subsp. mediasiatica (strain FSC147)).